The following is a 303-amino-acid chain: MTAVAIPAVRDYLTDLQGRIVAALEQAGGEAFRTDAWQRAEGGGGVSRLLEGGQLFERAGVLFSHVKGTRLPPSASAHRPELAGRGWEAMGVSMVLHPRNPYVPTTHMNVRMFVAAARPGHAESDVFWFGGGLDLTPYYPFEDDARHFHRACRDALDPHGADYYPRYKQWCDEYFFLKHRNETRGIGGIFFDDLNEPGFDASFALTCSVGDSFLPAYLPIVQARRDMPYGERERDFQAYRRGRYVEFNLVFDRGTLFGLQSGGRTESILLSMPPLAQWRYDWQPQAGTPEAALAEFLRPREWV.

Serine 93 is a substrate binding site. Residues histidine 97 and histidine 107 each contribute to the a divalent metal cation site. Histidine 107 functions as the Proton donor in the catalytic mechanism. 109 to 111 contributes to the substrate binding site; the sequence is NVR. 2 residues coordinate a divalent metal cation: histidine 149 and histidine 179. The segment at 244–279 is important for dimerization; sequence YVEFNLVFDRGTLFGLQSGGRTESILLSMPPLAQWR. 262–264 is a substrate binding site; it reads GGR.

Belongs to the aerobic coproporphyrinogen-III oxidase family. In terms of assembly, homodimer. A divalent metal cation is required as a cofactor.

The protein localises to the cytoplasm. It carries out the reaction coproporphyrinogen III + O2 + 2 H(+) = protoporphyrinogen IX + 2 CO2 + 2 H2O. It functions in the pathway porphyrin-containing compound metabolism; protoporphyrin-IX biosynthesis; protoporphyrinogen-IX from coproporphyrinogen-III (O2 route): step 1/1. Involved in the heme biosynthesis. Catalyzes the aerobic oxidative decarboxylation of propionate groups of rings A and B of coproporphyrinogen-III to yield the vinyl groups in protoporphyrinogen-IX. This Bordetella pertussis (strain Tohama I / ATCC BAA-589 / NCTC 13251) protein is Oxygen-dependent coproporphyrinogen-III oxidase.